A 542-amino-acid polypeptide reads, in one-letter code: CTP synthase (542 aa).

The segment at Met1–Leu265 is amidoligase domain. Ser13 contacts CTP. Ser13 is a UTP binding site. ATP contacts are provided by residues Ser14–Leu19 and Asp71. Residues Asp71 and Glu139 each coordinate Mg(2+). CTP is bound by residues Asp146–Glu148, Lys186–Gln191, and Lys222. Residues Lys186–Gln191 and Lys222 each bind UTP. Positions Ser291–Leu541 constitute a Glutamine amidotransferase type-1 domain. Gly353 contacts L-glutamine. Cys380 serves as the catalytic Nucleophile; for glutamine hydrolysis. L-glutamine-binding positions include Phe381–Gln384, Glu404, and Arg469. Catalysis depends on residues His514 and Glu516.

This sequence belongs to the CTP synthase family. Homotetramer.

It carries out the reaction UTP + L-glutamine + ATP + H2O = CTP + L-glutamate + ADP + phosphate + 2 H(+). The catalysed reaction is L-glutamine + H2O = L-glutamate + NH4(+). It catalyses the reaction UTP + NH4(+) + ATP = CTP + ADP + phosphate + 2 H(+). It functions in the pathway pyrimidine metabolism; CTP biosynthesis via de novo pathway; CTP from UDP: step 2/2. Allosterically activated by GTP, when glutamine is the substrate; GTP has no effect on the reaction when ammonia is the substrate. The allosteric effector GTP functions by stabilizing the protein conformation that binds the tetrahedral intermediate(s) formed during glutamine hydrolysis. Inhibited by the product CTP, via allosteric rather than competitive inhibition. In terms of biological role, catalyzes the ATP-dependent amination of UTP to CTP with either L-glutamine or ammonia as the source of nitrogen. Regulates intracellular CTP levels through interactions with the four ribonucleotide triphosphates. The chain is CTP synthase from Methylobacterium radiotolerans (strain ATCC 27329 / DSM 1819 / JCM 2831 / NBRC 15690 / NCIMB 10815 / 0-1).